A 261-amino-acid polypeptide reads, in one-letter code: Src-like-adapter 2 (261 aa).

Positions 1-10 (MGSLPSRRKS) are enriched in basic residues. Residues 1–31 (MGSLPSRRKSLPSPSLSSSVQGQGPVTMEAE) form a disordered region. The N-myristoyl glycine moiety is linked to residue glycine 2. The 61-residue stretch at 32-92 (RSKATAVALG…PSVHVAKVSH (61 aa)) folds into the SH3 domain. One can recognise an SH2 domain in the interval 94-191 (WLYEGLSREK…DICCLLKEPC (98 aa)). Residues 195–261 (RAGPLPGKDI…NDEAVSLDDA (67 aa)) form an SLA C-terminal region.

In terms of assembly, interacts (via SH2 domain) with ZAP70 (phosphorylated) and CD3Z (phosphorylated). Interacts (via SH2 domain) with CSF1R (phosphorylated). Interacts (via its C-terminal domain) with CBL (phosphorylated). In terms of processing, phosphorylated by CSF1R. As to expression, predominantly expressed in immune system, with highest levels in peripheral blood leukocytes. Expressed in spleen, thymus and lymph nodes. Expressed in T-cells as well as in monocytes, and at low level in B-cells. Also detected in placenta, prostate, skin, retina and colon.

Its subcellular location is the cytoplasm. It localises to the cell membrane. It is found in the cytoplasmic vesicle. In terms of biological role, adapter protein, which negatively regulates T-cell receptor (TCR) signaling. Inhibits T-cell antigen-receptor induced activation of nuclear factor of activated T-cells. May act by linking signaling proteins such as ZAP70 with CBL, leading to a CBL dependent degradation of signaling proteins. The chain is Src-like-adapter 2 (SLA2) from Homo sapiens (Human).